The sequence spans 461 residues: Cysteine--tRNA ligase (461 aa).

C28 provides a ligand contact to Zn(2+). The 'HIGH' region motif lies at 30–40 (ITVYDLCHIGH). The Zn(2+) site is built by C209, H234, and E238. Residues 266 to 270 (KMSKS) carry the 'KMSKS' region motif. K269 contributes to the ATP binding site.

Belongs to the class-I aminoacyl-tRNA synthetase family. In terms of assembly, monomer. Requires Zn(2+) as cofactor.

The protein localises to the cytoplasm. The enzyme catalyses tRNA(Cys) + L-cysteine + ATP = L-cysteinyl-tRNA(Cys) + AMP + diphosphate. The sequence is that of Cysteine--tRNA ligase from Escherichia coli O157:H7.